A 40-amino-acid chain; its full sequence is Snaclec LmrLEC-1 (40 aa).

A disulfide bond links C2 and C13.

Belongs to the snaclec family. As to quaternary structure, dimer (non-covalently linked) of heterodimers of subunits alpha and beta (disulfide-linked). As to expression, expressed by the venom gland.

It localises to the secreted. Functionally, interferes with one step of hemostasis (modulation of platelet aggregation, or coagulation cascade, for example). The sequence is that of Snaclec LmrLEC-1 from Lachesis muta rhombeata (Bushmaster).